Reading from the N-terminus, the 912-residue chain is Nitrate reductase [NADH] (912 aa).

A disordered region spans residues 1–99 (SVEPRQPFGR…PRDEGTADAW (99 aa)). Over residues 13-23 (APATAPTARAP) the composition is skewed to low complexity. Residues 54–68 (AEEDEEDDDEDDEGH) are compositionally biased toward acidic residues. The segment covering 85–94 (PSTRDPRDEG) has biased composition (basic and acidic residues). Residue C186 coordinates Mo-molybdopterin. A Cytochrome b5 heme-binding domain is found at 535-610 (DKQFTMSEVR…LDTYRIGELI (76 aa)). Heme-binding residues include H570 and H593. One can recognise an FAD-binding FR-type domain in the interval 651 to 764 (REKVPCRLVD…KGPLGHVEYT (114 aa)). FAD contacts are provided by residues 703–706 (RAYT), 720–724 (LVKVY), F725, F732, 737–739 (LMT), S788, and T791.

It belongs to the nitrate reductase family. Homodimer. Requires FAD as cofactor. Heme is required as a cofactor. Mo-molybdopterin serves as cofactor.

The catalysed reaction is nitrite + NAD(+) + H2O = nitrate + NADH + H(+). Functionally, nitrate reductase is a key enzyme involved in the first step of nitrate assimilation in plants, fungi and bacteria. This is Nitrate reductase [NADH] from Hordeum vulgare (Barley).